We begin with the raw amino-acid sequence, 198 residues long: Probable nicotinate-nucleotide adenylyltransferase (198 aa).

Belongs to the NadD family.

It catalyses the reaction nicotinate beta-D-ribonucleotide + ATP + H(+) = deamido-NAD(+) + diphosphate. It participates in cofactor biosynthesis; NAD(+) biosynthesis; deamido-NAD(+) from nicotinate D-ribonucleotide: step 1/1. Catalyzes the reversible adenylation of nicotinate mononucleotide (NaMN) to nicotinic acid adenine dinucleotide (NaAD). The chain is Probable nicotinate-nucleotide adenylyltransferase from Chlorobium limicola (strain DSM 245 / NBRC 103803 / 6330).